We begin with the raw amino-acid sequence, 348 residues long: Eukaryotic translation initiation factor 3 subunit H (348 aa).

The MPN domain occupies 35–169 (VQIDGLVVLK…LKAYRLTPKL (135 aa)). A compositionally biased stretch (low complexity) spans 267–285 (QQQKHQYQQRRQQENIQRQ). The interval 267–311 (QQQKHQYQQRRQQENIQRQSRGEPPLPEEDINKLFKPPQPPPRME) is disordered.

The protein belongs to the eIF-3 subunit H family. Component of the eukaryotic translation initiation factor 3 (eIF-3) complex, which is composed of 13 subunits: EIF3A, EIF3B, EIF3C, EIF3D, EIF3E, EIF3F, EIF3G, EIF3H, EIF3I, EIF3J, EIF3K, EIF3L and EIF3M.

It is found in the cytoplasm. In terms of biological role, component of the eukaryotic translation initiation factor 3 (eIF-3) complex, which is involved in protein synthesis of a specialized repertoire of mRNAs and, together with other initiation factors, stimulates binding of mRNA and methionyl-tRNAi to the 40S ribosome. The eIF-3 complex specifically targets and initiates translation of a subset of mRNAs involved in cell proliferation. The chain is Eukaryotic translation initiation factor 3 subunit H from Taeniopygia guttata (Zebra finch).